Consider the following 181-residue polypeptide: Adenylate kinase (181 aa).

10-15 (GAGKGT) is an ATP binding site. Residues 30 to 59 (STGDLFRYNISNGTELGLEAKKYLDAGDLV) are NMP. AMP contacts are provided by residues Thr-31, Arg-36, 57-59 (DLV), 85-88 (GYPR), and Gln-92. The interval 126 to 132 (GRGRDDD) is LID. Arg-127 is an ATP binding site. AMP-binding residues include Arg-129 and Arg-140. Gly-166 contributes to the ATP binding site.

This sequence belongs to the adenylate kinase family. Monomer.

The protein localises to the cytoplasm. The enzyme catalyses AMP + ATP = 2 ADP. It functions in the pathway purine metabolism; AMP biosynthesis via salvage pathway; AMP from ADP: step 1/1. In terms of biological role, catalyzes the reversible transfer of the terminal phosphate group between ATP and AMP. Plays an important role in cellular energy homeostasis and in adenine nucleotide metabolism. The polypeptide is Adenylate kinase (Mycolicibacterium vanbaalenii (strain DSM 7251 / JCM 13017 / BCRC 16820 / KCTC 9966 / NRRL B-24157 / PYR-1) (Mycobacterium vanbaalenii)).